Consider the following 436-residue polypeptide: 3-ketoacyl-CoA thiolase (436 aa).

Residue cysteine 99 is the Acyl-thioester intermediate of the active site. Catalysis depends on proton acceptor residues histidine 392 and cysteine 422.

The protein belongs to the thiolase-like superfamily. Thiolase family. As to quaternary structure, heterotetramer of two alpha chains (FadJ) and two beta chains (FadI).

The protein resides in the cytoplasm. It catalyses the reaction an acyl-CoA + acetyl-CoA = a 3-oxoacyl-CoA + CoA. It functions in the pathway lipid metabolism; fatty acid beta-oxidation. Functionally, catalyzes the final step of fatty acid oxidation in which acetyl-CoA is released and the CoA ester of a fatty acid two carbons shorter is formed. This chain is 3-ketoacyl-CoA thiolase, found in Shewanella baltica (strain OS185).